The chain runs to 506 residues: UDP-N-acetylmuramoyl-L-alanyl-D-glutamate--2,6-diaminopimelate ligase (506 aa).

A UDP-N-acetyl-alpha-D-muramoyl-L-alanyl-D-glutamate-binding site is contributed by S38. Residue 124-130 (GTNGKTS) coordinates ATP. Residues 166-167 (TT), S193, and R201 each bind UDP-N-acetyl-alpha-D-muramoyl-L-alanyl-D-glutamate. An N6-carboxylysine modification is found at K233. Meso-2,6-diaminopimelate is bound by residues R401, 425–428 (DNPR), G477, and E481. The Meso-diaminopimelate recognition motif signature appears at 425–428 (DNPR).

This sequence belongs to the MurCDEF family. MurE subfamily. It depends on Mg(2+) as a cofactor. Carboxylation is probably crucial for Mg(2+) binding and, consequently, for the gamma-phosphate positioning of ATP.

It localises to the cytoplasm. It carries out the reaction UDP-N-acetyl-alpha-D-muramoyl-L-alanyl-D-glutamate + meso-2,6-diaminopimelate + ATP = UDP-N-acetyl-alpha-D-muramoyl-L-alanyl-gamma-D-glutamyl-meso-2,6-diaminopimelate + ADP + phosphate + H(+). It functions in the pathway cell wall biogenesis; peptidoglycan biosynthesis. In terms of biological role, catalyzes the addition of meso-diaminopimelic acid to the nucleotide precursor UDP-N-acetylmuramoyl-L-alanyl-D-glutamate (UMAG) in the biosynthesis of bacterial cell-wall peptidoglycan. The chain is UDP-N-acetylmuramoyl-L-alanyl-D-glutamate--2,6-diaminopimelate ligase from Leptospira interrogans serogroup Icterohaemorrhagiae serovar copenhageni (strain Fiocruz L1-130).